Reading from the N-terminus, the 178-residue chain is Large ribosomal subunit protein uL16 (178 aa).

The protein belongs to the universal ribosomal protein uL16 family.

This chain is Large ribosomal subunit protein uL16, found in Pyrobaculum calidifontis (strain DSM 21063 / JCM 11548 / VA1).